Here is a 532-residue protein sequence, read N- to C-terminus: MNNESICILLLLFVKITSYYSYYISPLKKNIYTRTIYKGHILKLKNDKPEIDNNIINYFKNIRSDYPFFQQNNSPIYFDNAATTHKPKSVIEKIKNFYYYNNSNIHRGIYKISRNATDNYEHVRNIVQKYINCDSSDEIIFTSGATYGINMVCNIIMDKIIKNENDEIYISYLEHNSNIIPWQENIRNKKKGKLKYIPLKKNGYINIKKFVEKINDNTKIVSINHVSNVLGNIQNINLIIKKIKKKNPNIIVIIDAAQSFPHLKYDIKKMKLKNEDPDILVTSGHKFCAPFGSGFVYIKKKLTHTSKTNPFLYGSNIITDVNKYRSKFVSSPYIFETGTQNISAILAMGEAIKYLQKINDEGNAYKYEMYLYDLFLFYLRSFLTNHLVELPYIPEPNTPIKPDKMRTTMQVRNSKVDDKYFHSEIQNQDNDYLKIFVHNTRKDNKKKIAILPLWSLNFTSFDLVTFLDFKNICIRSGHHCASLLHNNFFNINESSRISIMFYNTPEEVQYLAEQISATTHMLHSMRRNGKAV.

The first 18 residues, 1-18 (MNNESICILLLLFVKITS), serve as a signal peptide directing secretion. An N6-(pyridoxal phosphate)lysine modification is found at Lys-286. The Cysteine persulfide intermediate role is filled by Cys-480.

The protein belongs to the class-V pyridoxal-phosphate-dependent aminotransferase family. Csd subfamily. In terms of assembly, monomer. Interacts with SufE; interaction enhances cysteine desulfurase activity of SufS. Pyridoxal 5'-phosphate serves as cofactor.

The protein localises to the plastid. Its subcellular location is the apicoplast. The catalysed reaction is (sulfur carrier)-H + L-cysteine = (sulfur carrier)-SH + L-alanine. Its pathway is cofactor biosynthesis; iron-sulfur cluster biosynthesis. In terms of biological role, catalyzes sulfur activation and mobilization in sulfur mobilization (SUF) pathway for iron-sulfur (Fe-S) cluster biogenesis. Active when in complex with a partner protein SufE. Required for apicoplast maintenance. Plays a role in the development of sporozoites in oocysts in mosquitoes. This is Putative cysteine desulfurase PbSufS from Plasmodium berghei (strain Anka).